Reading from the N-terminus, the 102-residue chain is Small ribosomal subunit protein uS10 (102 aa).

Belongs to the universal ribosomal protein uS10 family. In terms of assembly, part of the 30S ribosomal subunit.

Involved in the binding of tRNA to the ribosomes. The sequence is that of Small ribosomal subunit protein uS10 from Chloroflexus aurantiacus (strain ATCC 29366 / DSM 635 / J-10-fl).